The primary structure comprises 415 residues: Serine hydroxymethyltransferase 1 (415 aa).

Residues L122 and 126 to 128 (GHL) contribute to the (6S)-5,6,7,8-tetrahydrofolate site. K230 carries the post-translational modification N6-(pyridoxal phosphate)lysine.

It belongs to the SHMT family. As to quaternary structure, homodimer. The cofactor is pyridoxal 5'-phosphate.

It is found in the cytoplasm. The enzyme catalyses (6R)-5,10-methylene-5,6,7,8-tetrahydrofolate + glycine + H2O = (6S)-5,6,7,8-tetrahydrofolate + L-serine. Its pathway is one-carbon metabolism; tetrahydrofolate interconversion. It functions in the pathway amino-acid biosynthesis; glycine biosynthesis; glycine from L-serine: step 1/1. Catalyzes the reversible interconversion of serine and glycine with tetrahydrofolate (THF) serving as the one-carbon carrier. This reaction serves as the major source of one-carbon groups required for the biosynthesis of purines, thymidylate, methionine, and other important biomolecules. Also exhibits THF-independent aldolase activity toward beta-hydroxyamino acids, producing glycine and aldehydes, via a retro-aldol mechanism. The protein is Serine hydroxymethyltransferase 1 of Burkholderia mallei (strain ATCC 23344).